The sequence spans 363 residues: 3-dehydroquinate synthase (363 aa).

Residues 74-79 (DGEQYK), 108-112 (GVIGD), 132-133 (TT), Lys-145, Lys-154, and 172-175 (CLKT) contribute to the NAD(+) site. Residues Glu-187, His-250, and His-267 each contribute to the Zn(2+) site.

It belongs to the sugar phosphate cyclases superfamily. Dehydroquinate synthase family. NAD(+) is required as a cofactor. Requires Co(2+) as cofactor. It depends on Zn(2+) as a cofactor.

The protein resides in the cytoplasm. The catalysed reaction is 7-phospho-2-dehydro-3-deoxy-D-arabino-heptonate = 3-dehydroquinate + phosphate. Its pathway is metabolic intermediate biosynthesis; chorismate biosynthesis; chorismate from D-erythrose 4-phosphate and phosphoenolpyruvate: step 2/7. Functionally, catalyzes the conversion of 3-deoxy-D-arabino-heptulosonate 7-phosphate (DAHP) to dehydroquinate (DHQ). The sequence is that of 3-dehydroquinate synthase from Buchnera aphidicola subsp. Acyrthosiphon pisum (strain APS) (Acyrthosiphon pisum symbiotic bacterium).